Here is a 317-residue protein sequence, read N- to C-terminus: Acetyl-coenzyme A carboxylase carboxyl transferase subunit alpha (317 aa).

One can recognise a CoA carboxyltransferase C-terminal domain in the interval 40-293 (LEGRVRDAMV…ETVIGDALKE (254 aa)).

This sequence belongs to the AccA family. As to quaternary structure, acetyl-CoA carboxylase is a heterohexamer composed of biotin carboxyl carrier protein (AccB), biotin carboxylase (AccC) and two subunits each of ACCase subunit alpha (AccA) and ACCase subunit beta (AccD).

It localises to the cytoplasm. It carries out the reaction N(6)-carboxybiotinyl-L-lysyl-[protein] + acetyl-CoA = N(6)-biotinyl-L-lysyl-[protein] + malonyl-CoA. The protein operates within lipid metabolism; malonyl-CoA biosynthesis; malonyl-CoA from acetyl-CoA: step 1/1. Its function is as follows. Component of the acetyl coenzyme A carboxylase (ACC) complex. First, biotin carboxylase catalyzes the carboxylation of biotin on its carrier protein (BCCP) and then the CO(2) group is transferred by the carboxyltransferase to acetyl-CoA to form malonyl-CoA. The sequence is that of Acetyl-coenzyme A carboxylase carboxyl transferase subunit alpha from Rhizobium meliloti (strain 1021) (Ensifer meliloti).